The following is a 716-amino-acid chain: DNA ligase (716 aa).

NAD(+)-binding positions include 49-53 (DAAYD), 98-99 (SL), and E132. The active-site N6-AMP-lysine intermediate is the K134. Positions 155, 192, 308, and 332 each coordinate NAD(+). Residues C437, C439, C461, and C467 each coordinate Zn(2+). Residues 638–716 (KRNSPIATKT…EDEWLQLIGE (79 aa)) form the BRCT domain.

The protein belongs to the NAD-dependent DNA ligase family. LigA subfamily. The cofactor is Mg(2+). Mn(2+) is required as a cofactor.

It catalyses the reaction NAD(+) + (deoxyribonucleotide)n-3'-hydroxyl + 5'-phospho-(deoxyribonucleotide)m = (deoxyribonucleotide)n+m + AMP + beta-nicotinamide D-nucleotide.. DNA ligase that catalyzes the formation of phosphodiester linkages between 5'-phosphoryl and 3'-hydroxyl groups in double-stranded DNA using NAD as a coenzyme and as the energy source for the reaction. It is essential for DNA replication and repair of damaged DNA. The protein is DNA ligase of Bradyrhizobium sp. (strain ORS 278).